The primary structure comprises 224 residues: RNA-binding protein 24-B (224 aa).

Positions 11–88 constitute an RRM domain; the sequence is TKIFVGGLPY…RKANVNLAYL (78 aa).

It is found in the nucleus. The protein localises to the cytoplasm. Its function is as follows. Multifunctional RNA-binding protein involved in the regulation of pre-mRNA splicing, mRNA stability and mRNA translation important for cell fate decision and differentiation. Plays a major role in pre-mRNA alternative splicing regulation. Mediates preferentially muscle-specific exon inclusion in numerous mRNAs important for striated cardiac and skeletal muscle cell differentiation. Binds to intronic splicing enhancer (ISE) composed of stretches of GU-rich motifs localized in flanking intron of exon that will be included by alternative splicing. Involved in embryonic stem cell (ESC) transition to cardiac cell differentiation by promoting pre-mRNA alternative splicing events of several pluripotency and/or differentiation genes. Plays a role in the regulation of mRNA stability and mRNA translation to which it is bound. Involved in myogenic differentiation by regulating myog levels. Binds to a huge amount of mRNAs. Required for embryonic heart development, sarcomer and M-band formation in striated muscles. The polypeptide is RNA-binding protein 24-B (rbm24-b) (Xenopus laevis (African clawed frog)).